The primary structure comprises 620 residues: Zinc metalloproteinase-disintegrin-like ACLD (620 aa).

Residues 1–20 (MIQVLLVTLCLAVFPYQGSS) form the signal peptide. A propeptide spanning residues 21-189 (IILESGNVND…KKASQLNLTP (169 aa)) is cleaved from the precursor. The Peptidase M12B domain maps to 199 to 395 (KYVEFVVVLD…RRPKCILNEP (197 aa)). E202 lines the Ca(2+) pocket. N-linked (GlcNAc...) asparagine glycans are attached at residues N259 and N265. D286 is a Ca(2+) binding site. 3 cysteine pairs are disulfide-bonded: C310–C390, C350–C374, and C352–C357. Position 335 (H335) interacts with Zn(2+). Residue E336 is part of the active site. Residues H339 and H345 each coordinate Zn(2+). N373 carries N-linked (GlcNAc...) asparagine glycosylation. Ca(2+)-binding residues include C390 and N393. N396 carries N-linked (GlcNAc...) asparagine glycosylation. The region spanning 403–489 (PPVCGNELLE…ECPTDRFQRN (87 aa)) is the Disintegrin domain. Residues V405, N408, L410, E412, E415, and D418 each contribute to the Ca(2+) site. 14 disulfide bridges follow: C406/C435, C417/C430, C419/C425, C429/C452, C443/C449, C448/C474, C461/C481, C468/C500, C493/C505, C512/C562, C527/C573, C540/C550, C557/C599, and C593/C604. Residues 467 to 469 (DCD) carry the D/ECD-tripeptide motif. 2 N-linked (GlcNAc...) asparagine glycosylation sites follow: N502 and N536.

Belongs to the venom metalloproteinase (M12B) family. P-III subfamily. P-IIIa sub-subfamily. As to quaternary structure, monomer. It depends on Zn(2+) as a cofactor. Expressed by the venom gland.

The protein localises to the secreted. With respect to regulation, inhibited by EDTA and O-phenanthroline. Not inhibited by PMSF, benzamidine, irreversible serine-proteinase inhibitors and cysteine proteinase inhibitor E-64. Functionally, is a potent activator of prothrombin (F2). Does not elicit any hemorrhagic response. Barely inhibits collagen-induced platelet aggregation. Binds neither collagen, nor the jararhagin-monoclonal antibody MAJar3. Hydrolyzes the Aalpha-chain of fibrin and fibrinogen, without affecting the Bbeta- and gamma-chains. Is capable of triggering endothelial pro-inflammatory and procoagulant cell responses, but fails to trigger apoptosis. Induces von Willebrand factor release, and the expression of both ICAM1 and E-selectin (SELE) (without increase in VCAM1) in endothelial cells (HUVEC). Is also able to up-regulate the synthesis of the coagulation factor TF (F3). Enhances nitric oxide (NO) generation, prostacyclin production and interleukin-8 release. In Agkistrodon contortrix laticinctus (Broad-banded copperhead), this protein is Zinc metalloproteinase-disintegrin-like ACLD.